Here is a 373-residue protein sequence, read N- to C-terminus: Methylmalonyl-CoA decarboxylase subunit beta (373 aa).

The next 10 helical transmembrane spans lie at 17–37 (FLAFTTGNAIMILVGLILLYL), 38–58 (AFAREFEPLLLGPIAFGCLLA), 81–101 (IFPPLIFLGVGAMTDFGPLIA), 106–126 (LLLGAAAQIGVFAALGGAMML), 132–152 (EAAAIGIIGGADGPTSIYLAT), 156–176 (PHLLGAIAVAAYSYMSLVPLI), 206–226 (IVFPIVATIFISLLLPSITSL), 257–277 (VTIFLATGTGLTMSAEHFLSL), 280–300 (IKIILLGLFAFICGTAGGVLF), and 343–363 (FLLMHAMGPNVAGVIGTAVAA).

This sequence belongs to the GcdB/MmdB/OadB family. As to quaternary structure, the methylmalonyl-CoA decarboxylase is composed of five subunits: the carboxyltransferase alpha subunit (MmdA), the tunnel beta subunit (MmdB), the biotin-containing gamma subunit (MmdC), and the delta (MmdD) and epsilon (MmdE) subunits. The N-terminus is blocked.

The protein localises to the cell membrane. The enzyme catalyses (S)-methylmalonyl-CoA + Na(+)(in) + H(+)(out) = propanoyl-CoA + Na(+)(out) + CO2. Completely inhibited by avidin. Its function is as follows. Tunnel subunit of the sodium ion pump methylmalonyl-CoA decarboxylase, which converts the chemical energy of a decarboxylation reaction into an electrochemical gradient of Na(+) ions across the cytoplasmic membrane, thereby creating a sodium ion motive force that is used for ATP synthesis. The beta subunit catalyzes the decarboxylation of the carboxybiotin carrier protein and the coupled export of Na(+) ions. Can also convert malonyl-CoA into acetyl-CoA. The protein is Methylmalonyl-CoA decarboxylase subunit beta of Veillonella parvula (Staphylococcus parvulus).